A 481-amino-acid chain; its full sequence is Mediator of RNA polymerase II transcription subunit 3 (481 aa).

Positions 79–107 form a coiled coil; the sequence is QEKFQMIRSKVLGLTERLQELSNDFEELQ. 2 disordered regions span residues 140–261 and 415–463; these read AGAS…MGTP and NTKG…KSAY. Residues 148-203 are compositionally biased toward low complexity; sequence TPTPAAATPTTAPTPGAGTKKAAKTAPTPTATATIGTPSNNAPTPATTATTPGTQA. A compositionally biased stretch (basic residues) spans 204–213; it reads KKPRKPRQTK. The span at 214–248 shows a compositional bias: low complexity; the sequence is KQQQAAAAAAAVAQAQAQAQAQAQNQNQNNMQNKN. Positions 249-259 are enriched in polar residues; sequence ISNPGMNSNMG. The span at 428–458 shows a compositional bias: low complexity; the sequence is MDQNQNQNQSQNQSQNQNQSMNMNMNNDSNN.

It belongs to the Mediator complex subunit 3 family. As to quaternary structure, component of the Mediator complex.

The protein resides in the nucleus. Component of the Mediator complex, a coactivator involved in regulated gene transcription of nearly all RNA polymerase II-dependent genes. Mediator functions as a bridge to convey information from gene-specific regulatory proteins to the basal RNA polymerase II transcription machinery. Mediator is recruited to promoters by direct interactions with regulatory proteins and serves as a scaffold for the assembly of a functional preinitiation complex with RNA polymerase II and the general transcription factors. This is Mediator of RNA polymerase II transcription subunit 3 (PGD1) from Candida glabrata (strain ATCC 2001 / BCRC 20586 / JCM 3761 / NBRC 0622 / NRRL Y-65 / CBS 138) (Yeast).